We begin with the raw amino-acid sequence, 606 residues long: NADH-ubiquinone oxidoreductase chain 5 (606 aa).

15 consecutive transmembrane segments (helical) span residues 3–23, 38–58, 87–107, 124–144, 180–200, 216–236, 244–264, 276–296, 304–323, 328–350, 369–389, 404–424, 460–480, 483–503, and 586–606; these read VINLIPTLTLTSLIILTLPIT, ITKMAVTCAFAISLIPTLLFL, FFSLTFMPIALFITWSIMEFS, LLLFLITMLILVSANNLLQLF, IGDMGFIMMMAWFIIHLNSWE, LLGLLLASAGKSAQFGLHPWL, TPVSALLHSSTMVMAGVFTLI, IQTSTLCLGAITTLFTAICAL, IIALSTSSQLGLMMVTIGIN, AFTHMCTHAFFKAMLFLSSGSII, MPITSTAIIIGSLALTGMPFL, MSYINTWALLITLIAVSMTAS, LILGSIFMGFFISMNTIPHTT, MTMPPHLKFMALAVTLLGFTV, and LMKLYFLSFLLSITLGLLITL.

Belongs to the complex I subunit 5 family. In terms of assembly, core subunit of respiratory chain NADH dehydrogenase (Complex I) which is composed of 45 different subunits.

It localises to the mitochondrion inner membrane. The catalysed reaction is a ubiquinone + NADH + 5 H(+)(in) = a ubiquinol + NAD(+) + 4 H(+)(out). In terms of biological role, core subunit of the mitochondrial membrane respiratory chain NADH dehydrogenase (Complex I) which catalyzes electron transfer from NADH through the respiratory chain, using ubiquinone as an electron acceptor. Essential for the catalytic activity and assembly of complex I. This is NADH-ubiquinone oxidoreductase chain 5 (MT-ND5) from Elephas maximus (Indian elephant).